Consider the following 360-residue polypeptide: Phospho-N-acetylmuramoyl-pentapeptide-transferase (360 aa).

Transmembrane regions (helical) follow at residues 21 to 41 (YVTFRAILGLMTALMFSLWWG), 74 to 94 (MGGILILAGVFISVLLWGDLG), 97 to 117 (YVWVVLFVLASFGLIGFIDDY), 134 to 154 (YILQSLAALVIAFYLYASADM), 168 to 188 (IMPQLGGFFIVLAYFTIVGSS), 199 to 219 (GLAIMPTVMVAAAFALIAYLS), 236 to 256 (AGELVIVCTAIVGAGLGFLWF), 263 to 283 (VFMGDVGSLSLGAALGAIAVL), 288 to 308 (ILLVIMGGVFVMETVSVILQV), and 338 to 358 (VIVRFWIISLFLVLLGLATLK).

It belongs to the glycosyltransferase 4 family. MraY subfamily. It depends on Mg(2+) as a cofactor.

The protein localises to the cell inner membrane. The catalysed reaction is UDP-N-acetyl-alpha-D-muramoyl-L-alanyl-gamma-D-glutamyl-meso-2,6-diaminopimeloyl-D-alanyl-D-alanine + di-trans,octa-cis-undecaprenyl phosphate = di-trans,octa-cis-undecaprenyl diphospho-N-acetyl-alpha-D-muramoyl-L-alanyl-D-glutamyl-meso-2,6-diaminopimeloyl-D-alanyl-D-alanine + UMP. Its pathway is cell wall biogenesis; peptidoglycan biosynthesis. In terms of biological role, catalyzes the initial step of the lipid cycle reactions in the biosynthesis of the cell wall peptidoglycan: transfers peptidoglycan precursor phospho-MurNAc-pentapeptide from UDP-MurNAc-pentapeptide onto the lipid carrier undecaprenyl phosphate, yielding undecaprenyl-pyrophosphoryl-MurNAc-pentapeptide, known as lipid I. The sequence is that of Phospho-N-acetylmuramoyl-pentapeptide-transferase from Shewanella woodyi (strain ATCC 51908 / MS32).